The following is a 353-amino-acid chain: Nicotinate-nucleotide--dimethylbenzimidazole phosphoribosyltransferase (353 aa).

Glu-319 functions as the Proton acceptor in the catalytic mechanism.

It belongs to the CobT family.

It catalyses the reaction 5,6-dimethylbenzimidazole + nicotinate beta-D-ribonucleotide = alpha-ribazole 5'-phosphate + nicotinate + H(+). Its pathway is nucleoside biosynthesis; alpha-ribazole biosynthesis; alpha-ribazole from 5,6-dimethylbenzimidazole: step 1/2. Its function is as follows. Catalyzes the synthesis of alpha-ribazole-5'-phosphate from nicotinate mononucleotide (NAMN) and 5,6-dimethylbenzimidazole (DMB). This Chlorobaculum tepidum (strain ATCC 49652 / DSM 12025 / NBRC 103806 / TLS) (Chlorobium tepidum) protein is Nicotinate-nucleotide--dimethylbenzimidazole phosphoribosyltransferase.